Consider the following 90-residue polypeptide: Defensin-like protein 193 (90 aa).

Positions 1–27 are cleaved as a signal peptide; it reads MAMKSVSTLAVFAILFLVIVEMPEIKA. Cystine bridges form between Cys-32-Cys-86, Cys-45-Cys-69, Cys-54-Cys-81, and Cys-58-Cys-83.

This sequence belongs to the DEFL family. Protease inhibitor I18 (RTI/MTI-2) subfamily.

The protein localises to the secreted. The chain is Defensin-like protein 193 (ATTI2) from Arabidopsis thaliana (Mouse-ear cress).